Reading from the N-terminus, the 146-residue chain is MKLHELQPAPGSRKERNRVGRGIGSGNGKTSGKGHKGQNARSGGGVRIGFEGGQTPLFRRLPKRGFTNIHRKEYAIVNLEALNRFEDGTEVTPELLLETGVVSKLKAGIKVLGDGELTKKLTVKAHKFSASAKEAIEAAGGTTEVI.

The tract at residues Met1–Glu51 is disordered. 2 stretches are compositionally biased toward gly residues: residues Arg21 to Ser31 and Ser42 to Glu51.

It belongs to the universal ribosomal protein uL15 family. As to quaternary structure, part of the 50S ribosomal subunit.

Its function is as follows. Binds to the 23S rRNA. The sequence is that of Large ribosomal subunit protein uL15 from Anoxybacillus flavithermus (strain DSM 21510 / WK1).